The following is a 364-amino-acid chain: Spermidine/putrescine import ATP-binding protein PotA (364 aa).

Positions 6–236 constitute an ABC transporter domain; it reads IEIRQIYKSY…PANLHVAMFI (231 aa). 38–45 is an ATP binding site; sequence GPSGCGKT.

The protein belongs to the ABC transporter superfamily. Spermidine/putrescine importer (TC 3.A.1.11.1) family. The complex is composed of two ATP-binding proteins (PotA), two transmembrane proteins (PotB and PotC) and a solute-binding protein (PotD).

Its subcellular location is the cell inner membrane. It catalyses the reaction ATP + H2O + polyamine-[polyamine-binding protein]Side 1 = ADP + phosphate + polyamineSide 2 + [polyamine-binding protein]Side 1.. Part of the ABC transporter complex PotABCD involved in spermidine/putrescine import. Responsible for energy coupling to the transport system. The chain is Spermidine/putrescine import ATP-binding protein PotA from Legionella pneumophila (strain Paris).